A 336-amino-acid polypeptide reads, in one-letter code: Dihydroorotate dehydrogenase (quinone) (336 aa).

Residues 62–66 (AGLDK) and T86 each bind FMN. K66 is a substrate binding site. 111–115 (NRMGF) contacts substrate. FMN-binding residues include N139 and N172. N172 provides a ligand contact to substrate. The active-site Nucleophile is S175. N177 contributes to the substrate binding site. K217 and T245 together coordinate FMN. A substrate-binding site is contributed by 246–247 (NT). Residues G268, G297, and 318–319 (YS) each bind FMN.

It belongs to the dihydroorotate dehydrogenase family. Type 2 subfamily. As to quaternary structure, monomer. Requires FMN as cofactor.

It localises to the cell membrane. It carries out the reaction (S)-dihydroorotate + a quinone = orotate + a quinol. It participates in pyrimidine metabolism; UMP biosynthesis via de novo pathway; orotate from (S)-dihydroorotate (quinone route): step 1/1. Functionally, catalyzes the conversion of dihydroorotate to orotate with quinone as electron acceptor. This is Dihydroorotate dehydrogenase (quinone) from Yersinia enterocolitica serotype O:8 / biotype 1B (strain NCTC 13174 / 8081).